The chain runs to 1151 residues: Ankyrin and IPT/TIG repeat-containing protein C26H5.05 (1151 aa).

Disordered regions lie at residues 77–104 (NLPS…AECL), 452–511 (KSRN…ENSR), and 516–535 (QLSA…KSVE). The span at 87–98 (SHASSPNLSNSQ) shows a compositional bias: polar residues. Residues 452–463 (KSRNLTKSEKTG) show a composition bias toward basic and acidic residues. Composition is skewed to polar residues over residues 464 to 496 (KSNS…SDNP) and 517 to 532 (LSAS…STLK). In terms of domain architecture, IPT/TIG spans 658–739 (PLISRIIPNK…SSEAPVMFTY (82 aa)). ANK repeat units lie at residues 861-890 (SGRS…DVNK) and 894-923 (LGYT…KPDV). The disordered stretch occupies residues 1041–1067 (PPPYSEFADDTTAQAGSSKRDSAISED). The span at 1058-1067 (SKRDSAISED) shows a compositional bias: basic and acidic residues. The helical transmembrane segment at 1113–1133 (MDFMLFSFWLPALLLLSIFGL) threads the bilayer.

Its subcellular location is the vacuole membrane. The chain is Ankyrin and IPT/TIG repeat-containing protein C26H5.05 from Schizosaccharomyces pombe (strain 972 / ATCC 24843) (Fission yeast).